We begin with the raw amino-acid sequence, 268 residues long: Probable 6-phosphogluconolactonase 1 (268 aa).

It belongs to the glucosamine/galactosamine-6-phosphate isomerase family. 6-phosphogluconolactonase subfamily.

It is found in the cytoplasm. The protein resides in the cytosol. The catalysed reaction is 6-phospho-D-glucono-1,5-lactone + H2O = 6-phospho-D-gluconate + H(+). It participates in carbohydrate degradation; pentose phosphate pathway; D-ribulose 5-phosphate from D-glucose 6-phosphate (oxidative stage): step 2/3. Functionally, catalyzes the hydrolysis of 6-phosphogluconolactone to 6-phosphogluconate. This chain is Probable 6-phosphogluconolactonase 1, found in Arabidopsis thaliana (Mouse-ear cress).